The chain runs to 506 residues: Maturase K (506 aa).

It belongs to the intron maturase 2 family. MatK subfamily.

It is found in the plastid. The protein localises to the chloroplast. In terms of biological role, usually encoded in the trnK tRNA gene intron. Probably assists in splicing its own and other chloroplast group II introns. The sequence is that of Maturase K from Carica papaya (Papaya).